We begin with the raw amino-acid sequence, 475 residues long: Ribulose bisphosphate carboxylase large chain (475 aa).

Substrate-binding residues include Asn123 and Thr173. Residue Lys175 is the Proton acceptor of the active site. Lys177 is a substrate binding site. Residues Lys201, Asp203, and Glu204 each contribute to the Mg(2+) site. Lys201 carries the N6-carboxylysine modification. Catalysis depends on His294, which acts as the Proton acceptor. The substrate site is built by Arg295, His327, and Ser379.

This sequence belongs to the RuBisCO large chain family. Type I subfamily. In terms of assembly, heterohexadecamer of 8 large chains and 8 small chains; disulfide-linked. The disulfide link is formed within the large subunit homodimers. Interacts with assembly factor Raf1 which helps form the holoenzyme, most interaction (and folding) occurs in the cytoplasm. Mg(2+) serves as cofactor. Post-translationally, the disulfide bond which can form in the large chain dimeric partners within the hexadecamer appears to be associated with oxidative stress and protein turnover.

Its subcellular location is the carboxysome. It is found in the cytoplasm. It catalyses the reaction 2 (2R)-3-phosphoglycerate + 2 H(+) = D-ribulose 1,5-bisphosphate + CO2 + H2O. The enzyme catalyses D-ribulose 1,5-bisphosphate + O2 = 2-phosphoglycolate + (2R)-3-phosphoglycerate + 2 H(+). Its function is as follows. RuBisCO catalyzes two reactions: the carboxylation of D-ribulose 1,5-bisphosphate, the primary event in carbon dioxide fixation, as well as the oxidative fragmentation of the pentose substrate in the photorespiration process. Both reactions occur simultaneously and in competition at the same active site. This Thermosynechococcus vestitus (strain NIES-2133 / IAM M-273 / BP-1) protein is Ribulose bisphosphate carboxylase large chain.